The chain runs to 194 residues: Histone H1.0 (194 aa).

The residue at position 1 (Met-1) is an N-acetylmethionine. Residues 1 to 11 (MTENSTSAPAA) are compositionally biased toward low complexity. The tract at residues 1-29 (MTENSTSAPAAKPKRAKASKKSTDHPKYS) is disordered. Thr-2 bears the N-acetylthreonine; partial; in Histone H1.0, N-terminally processed mark. Asn-4 carries the post-translational modification Deamidated asparagine; partial. Residues 24 to 97 (DHPKYSDMIV…GASGSFRLAK (74 aa)) form the H15 domain. Arg-42 is modified (citrulline). The interval 84–194 (TKGVGASGSF…SSAKRAGKKK (111 aa)) is disordered. Position 104 is an ADP-ribosylserine (Ser-104). Basic residues predominate over residues 105 to 194 (VAFKKTKKEI…SSAKRAGKKK (90 aa)).

Belongs to the histone H1/H5 family. Phosphorylated on Ser-17 in RNA edited version. Post-translationally, ADP-ribosylated on Ser-104 in response to DNA damage.

The protein resides in the nucleus. Its subcellular location is the chromosome. Its function is as follows. Histones H1 are necessary for the condensation of nucleosome chains into higher-order structures. The histones H1.0 are found in cells that are in terminal stages of differentiation or that have low rates of cell division. This chain is Histone H1.0, found in Homo sapiens (Human).